A 467-amino-acid chain; its full sequence is Probable Xaa-Pro aminopeptidase pepP (467 aa).

Positions 264, 275, 398, and 438 each coordinate Mn(2+).

This sequence belongs to the peptidase M24B family. Mn(2+) is required as a cofactor.

It carries out the reaction Release of any N-terminal amino acid, including proline, that is linked to proline, even from a dipeptide or tripeptide.. Catalyzes the removal of a penultimate prolyl residue from the N-termini of peptides. This chain is Probable Xaa-Pro aminopeptidase pepP (pepP), found in Neosartorya fischeri (strain ATCC 1020 / DSM 3700 / CBS 544.65 / FGSC A1164 / JCM 1740 / NRRL 181 / WB 181) (Aspergillus fischerianus).